Reading from the N-terminus, the 808-residue chain is Phospholipase D alpha 1 (808 aa).

Residues 1 to 125 (MSKVLLHGTL…LDGDEVDKWI (125 aa)) enclose the C2 domain. D186 serves as a coordination point for Ca(2+). A PLD phosphodiesterase 1 domain is found at 326-364 (TMFTHHQKIVVVDHELPRGGSQKRRVMSFVGGIDLCDGR). Active-site residues include H331, K333, and D338. H331 contributes to the a 1,2-diacyl-sn-glycero-3-phosphate binding site. Ca(2+) contacts are provided by H370 and H404. The a 1,2-diacyl-sn-glycero-3-phosphate site is built by Q520 and H659. The 28-residue stretch at 654 to 681 (FMIYVHSKMMIVDDEYIIVGSANINQRS) folds into the PLD phosphodiesterase 2 domain. Active-site residues include H659, K661, and D666. A Ca(2+)-binding site is contributed by E720.

The protein belongs to the phospholipase D family. C2-PLD subfamily. In terms of assembly, interacts (via C2 domain) with CARDA (via RGD or KGE motifs). Ca(2+) is required as a cofactor.

It carries out the reaction a 1,2-diacyl-sn-glycero-3-phosphocholine + H2O = a 1,2-diacyl-sn-glycero-3-phosphate + choline + H(+). Hydrolyzes glycerol-phospholipids at the terminal phosphodiesteric bond. Plays an important role in various cellular processes. This Cynara cardunculus (Cardoon) protein is Phospholipase D alpha 1.